A 329-amino-acid polypeptide reads, in one-letter code: MQNSLLKPKAINVEQMGGNRAKVALEPFERGYGHTLGNALRRVLLASMPGYAATEVTIAGVLHEYSSIDGVQEDVVNILLNLKGVVFKLHNRDEVTLSLRKDGEGLVTASDIQTPHDVEIINPDHVIAHLSQGGKLDMQIKVEKGRGYVPGTMRRHGDEPTKSIGRIILDASFSPVKRVSYTVESARVEQRTDLDKLVVDIETNGAISAEDAVRASAKILVEQLAVFAQLEGSELAAFDTPSPRGSTQFDPILLRPVDELELTVRSANCLKAENIYYIGDLIQRTENELLKTPNLGRKSLNEIKEVLASRGLTLGMKLESWPPAALEKR.

Residues 1–231 are alpha N-terminal domain (alpha-NTD); the sequence is MQNSLLKPKA…EQLAVFAQLE (231 aa). The segment at 249–329 is alpha C-terminal domain (alpha-CTD); the sequence is FDPILLRPVD…SWPPAALEKR (81 aa).

This sequence belongs to the RNA polymerase alpha chain family. Homodimer. The RNAP catalytic core consists of 2 alpha, 1 beta, 1 beta' and 1 omega subunit. When a sigma factor is associated with the core the holoenzyme is formed, which can initiate transcription.

The catalysed reaction is RNA(n) + a ribonucleoside 5'-triphosphate = RNA(n+1) + diphosphate. Functionally, DNA-dependent RNA polymerase catalyzes the transcription of DNA into RNA using the four ribonucleoside triphosphates as substrates. This Albidiferax ferrireducens (strain ATCC BAA-621 / DSM 15236 / T118) (Rhodoferax ferrireducens) protein is DNA-directed RNA polymerase subunit alpha.